Consider the following 737-residue polypeptide: Polyribonucleotide nucleotidyltransferase (737 aa).

Residues Asp-489 and Asp-495 each contribute to the Mg(2+) site. Residues 556–615 (PKIDTIKIDVDKIKIVIGKGGETIDKIIAETGVKIDIDEEGNVSIYSSDQDAINRAKEII) form the KH domain. Residues 625–693 (DEVYRAKVVR…EKGRIDASMK (69 aa)) enclose the S1 motif domain. The tract at residues 691–737 (SMKALLPRPPKPEHDEKGEKSERPHRPRHHKDHKPKKEFTETPKDSE) is disordered. Residues 700 to 714 (PKPEHDEKGEKSERP) are compositionally biased toward basic and acidic residues. Over residues 715 to 724 (HRPRHHKDHK) the composition is skewed to basic residues. The segment covering 725–737 (PKKEFTETPKDSE) has biased composition (basic and acidic residues).

Belongs to the polyribonucleotide nucleotidyltransferase family. Mg(2+) serves as cofactor.

The protein resides in the cytoplasm. It catalyses the reaction RNA(n+1) + phosphate = RNA(n) + a ribonucleoside 5'-diphosphate. Its function is as follows. Involved in mRNA degradation. Catalyzes the phosphorolysis of single-stranded polyribonucleotides processively in the 3'- to 5'-direction. In Streptococcus pneumoniae serotype 19F (strain G54), this protein is Polyribonucleotide nucleotidyltransferase.